We begin with the raw amino-acid sequence, 227 residues long: Transmembrane emp24 domain-containing protein 1 (227 aa).

An N-terminal signal peptide occupies residues 1–24; it reads MMAAGAAVALALWLLLPAVGVGEA. Over 25 to 194 the chain is Extracellular; it reads GPPPIQDGEF…LQEDNLERVN (170 aa). Residues 43–125 form the GOLD domain; it reads KQCFYQSAPA…EKLVFFELIF (83 aa). The stretch at 145-170 forms a coiled coil; that stretch reads EMLDVKMEDIKESIETMRTRLERSIQ. The chain crosses the membrane as a helical span at residues 195–215; the sequence is FWSAANVAVLLLVAVLQVCTL. Topologically, residues 216–227 are cytoplasmic; it reads KRFFHDKRPVPT. The COPII vesicle coat-binding signature appears at 218–219; that stretch reads FF. The COPI vesicle coat-binding signature appears at 218–227; it reads FFHDKRPVPT.

It belongs to the EMP24/GP25L family. As to quaternary structure, homodimer in endoplasmic reticulum, endoplasmic reticulum-Golgi intermediate compartment and cis-Golgi network. Interacts with IL1RL1. Interacts with RNF26; this interaction is important to modulate innate immune signaling through the cGAS-STING pathway. In terms of tissue distribution, widely expressed.

It is found in the cell membrane. It localises to the endoplasmic reticulum membrane. The protein localises to the golgi apparatus. The protein resides in the cis-Golgi network membrane. Its subcellular location is the endoplasmic reticulum-Golgi intermediate compartment membrane. Potential role in vesicular protein trafficking, mainly in the early secretory pathway. May act as a cargo receptor at the lumenal side for incorporation of secretory cargo molecules into transport vesicles and may be involved in vesicle coat formation at the cytoplasmic side. Plays a positive role in IL-33-mediated IL-8 and IL-6 production by interacting with interleukin-33 receptor IL1RL1. Plays also a role in the modulation of innate immune signaling through the cGAS-STING pathway by interacting with RNF26. The protein is Transmembrane emp24 domain-containing protein 1 (Tmed1) of Mus musculus (Mouse).